Here is a 347-residue protein sequence, read N- to C-terminus: Mitochondrial carrier protein rim2 (347 aa).

Solcar repeat units lie at residues 32–136 (PPPL…GKRI), 146–234 (ENSQ…FKHA), and 256–345 (LDWG…IMHF). The next 6 membrane-spanning stretches (helical) occupy residues 38–58 (FIAG…LDVV), 105–125 (TRAL…ARSI), 152–172 (LMAA…IWLV), 214–233 (SLLG…KFKH), 262–282 (LGGA…HEVV), and 317–338 (LYGG…LFGS).

It is found in the mitochondrion inner membrane. It carries out the reaction 5-methyl-UTP(out) + UTP(in) = 5-methyl-UTP(in) + UTP(out). Functionally, mitochondrial transporter that imports/exports pyrimidine nucleotides into and from mitochondria. Selectively transports uridine, thymidine, and cytosine (deoxy)nucleoside di- and triphosphates by an antiport mechanism. Also transports, with lower efficiency, uridine, thymidine, and cytosine (deoxy)nucleoside monophosphates as well as guanosine (deoxy)nucleoside di- and triphosphate. May import (deoxy)nucleoside triphosphates in exchange for intramitochondrial (deoxy)nucleoside monophosphates, thus providing precursors necessary for de novo synthesis of mitochondrial DNA and RNA while exporting products of their catabolism. Mediates the transport of iron and other divalent metal ions like copper and zinc across the mitochondrial inner membrane in a pyrimidine nucleotide-dependent fashion. Catalyzes the co-import of pyrimidine nucleotides and divalent metal ions including ferrous iron. Participates in mitochondrial genome maintenance, regulation of mitochondrial membrane potential and mitochondrial respiration. This chain is Mitochondrial carrier protein rim2 (rim2), found in Schizosaccharomyces pombe (strain 972 / ATCC 24843) (Fission yeast).